Consider the following 240-residue polypeptide: Coiled-coil domain-containing protein 152 (240 aa).

Positions 55-223 (MQTKEVAMKQ…LEQRLSVSKD (169 aa)) form a coiled coil.

This is Coiled-coil domain-containing protein 152 (CCDC152) from Bos taurus (Bovine).